The chain runs to 199 residues: MLLPYMETGRIEAGCDEAGRGCLAGAVFAAAVILPEDFKNEDLNDSKQLSEKKRYKLRPVIEREAIAWAVGIVSPEEIDKINILKASFLAMHRAIEQLKVRPEHLLIDGNRFTPYPDIPHTTVVKGDGKYLSIAAASILAKTYRDDYMNELALEYPAYHWLDNKGYPTKVHREAIRTHGITPYHRKTFTLLPEQLTLGF.

The RNase H type-2 domain maps to 10 to 199; sequence RIEAGCDEAG…LLPEQLTLGF (190 aa). D16, E17, and D108 together coordinate a divalent metal cation.

Belongs to the RNase HII family. Requires Mn(2+) as cofactor. Mg(2+) serves as cofactor.

The protein resides in the cytoplasm. It carries out the reaction Endonucleolytic cleavage to 5'-phosphomonoester.. In terms of biological role, endonuclease that specifically degrades the RNA of RNA-DNA hybrids. The polypeptide is Ribonuclease HII (Parabacteroides distasonis (strain ATCC 8503 / DSM 20701 / CIP 104284 / JCM 5825 / NCTC 11152)).